Reading from the N-terminus, the 897-residue chain is MLRQVIHRGLKASFYWLGLFVSRHPVFFLTVPAVLTIIFGSTVLSRFKPETDLEILVAPTHSLAKIERSLANSLFPIDQSKHKLYSDLHTPGRYGRLILLARSGGNILELAEQVLQVHKKVLDMRVNYKGFNYTFAHLCVLRHRDKRCLLDDIITIFEDIRLAVLSNSTFSKVPVSYPNTTLKDGRVSFIGHQLGGVALPANNRDQQVKFARAIQITYYLRNLGPVVQDIIAEKWETEFCKLVHQLATDSQELHIQSLTSFSLWRDFHKTGVLAKSEVLVSLVLVLLAATISSSMRDCLRGKPFLGLLGVLTICIANVTAAGIFFISDGKFNSTLLGIPFFAMGHGTKGVFELLAGWRRTRESLPFKERVADAFADVMVCYTMTSSLYIITFGMGASPFTNIESVKVFCQSMCVAVLVNYFYVFSFYGSCLVFAGQLEQNRYHSVFCCKIPSVEYLDRQPTWFKTMMSDGHDLSTHHDSVPYQNHFIQHFLREHYTEWITNTYVKPFVVILYLIYASFSFMGCLQISDGSNIINLLASNSPSVSFALTQQKYFSNYSPVIGFYIYEPIEYWNSTVQEHLKTLGQGFNKISWIDNYFHFLRVVNISASTKSDFISILKTSFLRSPEYQHFVDDIIFSKNGAEYDIIASKMYLVARTTEKTREEVVELLERLRPLSLINSIKFIVFNPTFVFMDRYSSSIISPILTSGFSVLTILILTFFLVINPLGNFWLILTVTSVELGVLGLMTLWNVDMDSISILCLIYTLNFAMDHCAPHLYTFVLATEHTRTQCIKISLEEHGAAILQNTSCFVIGIMPLLFVPSNLTYTLFKCSLLTAGCTVLHCFVILPVFLTFFPPSKKRHKKKKRAKRKEREREREREREREEIECIEVRENPDHVTNV.

The helical transmembrane segment at 25–45 (PVFFLTVPAVLTIIFGSTVLS) threads the bilayer. N-linked (GlcNAc...) asparagine glycans are attached at residues asparagine 132, asparagine 167, and asparagine 179. 2 consecutive transmembrane segments (helical) span residues 271-291 (GVLA…AATI) and 306-326 (GLLG…IFFI). Positions 273 to 433 (LAKSEVLVSL…FSFYGSCLVF (161 aa)) constitute an SSD domain. A glycan (N-linked (GlcNAc...) asparagine) is linked at asparagine 332. A run of 4 helical transmembrane segments spans residues 335–355 (LLGI…ELLA), 377–397 (VMVC…MGAS), 414–434 (VAVL…LVFA), and 506–526 (PFVV…CLQI). Residues asparagine 572 and asparagine 603 are each glycosylated (N-linked (GlcNAc...) asparagine). Transmembrane regions (helical) follow at residues 701–721 (PILT…FLVI), 727–747 (FWLI…MTLW), and 754–774 (ISIL…APHL). Asparagine 803 carries an N-linked (GlcNAc...) asparagine glycan. Helical transmembrane passes span 806–826 (CFVI…YTLF) and 831–851 (LTAG…LTFF). The span at 856–866 (KRHKKKKRAKR) shows a compositional bias: basic residues. Residues 856–881 (KRHKKKKRAKRKEREREREREREREE) form a disordered region. A compositionally biased stretch (basic and acidic residues) spans 867–881 (KEREREREREREREE).

Belongs to the patched family.

The protein resides in the cell membrane. It is found in the cell projection. The protein localises to the dendritic spine. Can bind cholesterol in vitro. The protein is Patched domain-containing protein 1 (ptchd1) of Danio rerio (Zebrafish).